Reading from the N-terminus, the 216-residue chain is NKG2-D type II integral membrane protein (216 aa).

Over 1–51 (MGWIRGRRSRHSWEMSEFHNYNLDLKKSDFSTRWQKQRCPVVKSKCRENAS) the chain is Cytoplasmic. The chain crosses the membrane as a helical; Signal-anchor for type II membrane protein span at residues 52–72 (PFFFCCFIAVAMGIRFIIMVT). The Extracellular portion of the chain corresponds to 73 to 216 (IWSAVFLNSL…NTYICMQRTV (144 aa)). Cystine bridges form between Cys96/Cys105, Cys99/Cys110, Cys127/Cys211, and Cys189/Cys203. Residues 98–213 (PCPKNWICYK…STPNTYICMQ (116 aa)) enclose the C-type lectin domain. Residues Asn131, Asn163, and Asn202 are each glycosylated (N-linked (GlcNAc...) asparagine).

Homodimer; disulfide-linked. Heterohexamer composed of two subunits of KLRK1 and four subunits of HCST/DAP10. Interacts (via transmembrane domain) with HCST/DAP10 (via transmembrane domain); the interaction is required for KLRK1 NK cell surface and induces NK cell-mediated cytotoxicity. Does not interact with TYROBP. Interacts with CEACAM1; recruits PTPN6 that dephosphorylates VAV1. Expressed in natural killer (NK) cells, CD8(+) alpha-beta and gamma-delta T-cells. Expressed on essentially all CD56+CD3- NK cells from freshly isolated PBMC. Expressed in interferon-producing killer dendritic cells (IKDCs).

The protein resides in the cell membrane. Functions as an activating and costimulatory receptor involved in immunosurveillance upon binding to various cellular stress-inducible ligands displayed at the surface of autologous tumor cells and virus-infected cells. Provides both stimulatory and costimulatory innate immune responses on activated killer (NK) cells, leading to cytotoxic activity. Acts as a costimulatory receptor for T-cell receptor (TCR) in CD8(+) T-cell-mediated adaptive immune responses by amplifying T-cell activation. Stimulates perforin-mediated elimination of ligand-expressing tumor cells. Signaling involves calcium influx, culminating in the expression of TNF-alpha. Participates in NK cell-mediated bone marrow graft rejection. May play a regulatory role in differentiation and survival of NK cells. Binds to ligands belonging to various subfamilies of MHC class I-related glycoproteins including MICA, MICB, RAET1E, RAET1G, RAET1L/ULBP6, ULBP1, ULBP2, ULBP3 (ULBP2&gt;ULBP1&gt;ULBP3) and ULBP4. This chain is NKG2-D type II integral membrane protein (KLRK1), found in Homo sapiens (Human).